Reading from the N-terminus, the 316-residue chain is Pantothenate kinase (316 aa).

95-102 (GSVAVGKS) is a binding site for ATP.

Belongs to the prokaryotic pantothenate kinase family.

It localises to the cytoplasm. The enzyme catalyses (R)-pantothenate + ATP = (R)-4'-phosphopantothenate + ADP + H(+). Its pathway is cofactor biosynthesis; coenzyme A biosynthesis; CoA from (R)-pantothenate: step 1/5. The polypeptide is Pantothenate kinase (Shigella dysenteriae serotype 1 (strain Sd197)).